A 107-amino-acid chain; its full sequence is UPF0145 protein ECA2666 (107 aa).

The protein belongs to the UPF0145 family.

The chain is UPF0145 protein ECA2666 from Pectobacterium atrosepticum (strain SCRI 1043 / ATCC BAA-672) (Erwinia carotovora subsp. atroseptica).